The chain runs to 24 residues: Humanin-like 6 (24 aa).

This sequence belongs to the humanin family. In terms of tissue distribution, expressed in skeletal muscle and testis.

The protein resides in the secreted. Its subcellular location is the cytoplasm. Plays a role as a neuroprotective and antiapoptotic factor. This chain is Humanin-like 6, found in Homo sapiens (Human).